A 351-amino-acid polypeptide reads, in one-letter code: Molybdenum import ATP-binding protein ModC (351 aa).

An ABC transporter domain is found at 1–229; sequence MLEINIHQQL…DILADWQSET (229 aa). Position 31–38 (31–38) interacts with ATP; it reads GRSGAGKS. One can recognise a Mop domain in the interval 290 to 351; the sequence is HSSIRNILNG…IYVQIKSVSL (62 aa).

Belongs to the ABC transporter superfamily. Molybdate importer (TC 3.A.1.8) family. In terms of assembly, the complex is composed of two ATP-binding proteins (ModC), two transmembrane proteins (ModB) and a solute-binding protein (ModA).

The protein localises to the cell inner membrane. It catalyses the reaction molybdate(out) + ATP + H2O = molybdate(in) + ADP + phosphate + H(+). Part of the ABC transporter complex ModABC involved in molybdenum import. Responsible for energy coupling to the transport system. The protein is Molybdenum import ATP-binding protein ModC of Haemophilus ducreyi (strain 35000HP / ATCC 700724).